We begin with the raw amino-acid sequence, 201 residues long: Imidazole glycerol phosphate synthase subunit HisH 1 (201 aa).

The Glutamine amidotransferase type-1 domain maps to 1 to 201 (MIALIDYKAG…LKLLENFIRL (201 aa)). The Nucleophile role is filled by cysteine 80. Residues histidine 183 and glutamate 185 contribute to the active site.

As to quaternary structure, heterodimer of HisH and HisF.

The protein resides in the cytoplasm. It carries out the reaction 5-[(5-phospho-1-deoxy-D-ribulos-1-ylimino)methylamino]-1-(5-phospho-beta-D-ribosyl)imidazole-4-carboxamide + L-glutamine = D-erythro-1-(imidazol-4-yl)glycerol 3-phosphate + 5-amino-1-(5-phospho-beta-D-ribosyl)imidazole-4-carboxamide + L-glutamate + H(+). The catalysed reaction is L-glutamine + H2O = L-glutamate + NH4(+). It functions in the pathway amino-acid biosynthesis; L-histidine biosynthesis; L-histidine from 5-phospho-alpha-D-ribose 1-diphosphate: step 5/9. Its function is as follows. IGPS catalyzes the conversion of PRFAR and glutamine to IGP, AICAR and glutamate. The HisH subunit provides the glutamine amidotransferase activity that produces the ammonia necessary to HisF for the synthesis of IGP and AICAR. This Campylobacter jejuni (strain RM1221) protein is Imidazole glycerol phosphate synthase subunit HisH 1.